The chain runs to 246 residues: Large ribosomal subunit protein uL3 (246 aa).

2 disordered regions span residues 140-162 (SHRS…NKKM) and 215-246 (DVPL…EENA). Q151 carries the post-translational modification N5-methylglutamine. Residues 234–246 (EAAPEAPASEENA) show a composition bias toward low complexity.

The protein belongs to the universal ribosomal protein uL3 family. Part of the 50S ribosomal subunit. Forms a cluster with proteins L14 and L19. Methylated by PrmB.

One of the primary rRNA binding proteins, it binds directly near the 3'-end of the 23S rRNA, where it nucleates assembly of the 50S subunit. The polypeptide is Large ribosomal subunit protein uL3 (Methylorubrum extorquens (strain PA1) (Methylobacterium extorquens)).